A 178-amino-acid chain; its full sequence is Large ribosomal subunit protein uL6 (178 aa).

The protein belongs to the universal ribosomal protein uL6 family. As to quaternary structure, part of the 50S ribosomal subunit.

Its function is as follows. This protein binds to the 23S rRNA, and is important in its secondary structure. It is located near the subunit interface in the base of the L7/L12 stalk, and near the tRNA binding site of the peptidyltransferase center. The protein is Large ribosomal subunit protein uL6 of Streptococcus gordonii (strain Challis / ATCC 35105 / BCRC 15272 / CH1 / DL1 / V288).